The following is a 322-amino-acid chain: Cytochrome c biogenesis protein CcsA (322 aa).

Helical transmembrane passes span 2–22, 44–64, 68–88, 143–163, 226–246, 260–274, and 289–309; these read LFATLEHILTHISFSTISIVI, GMIATFFSITGFLVSRWLSSG, LSNLYESLIFLSWALYILHTI, MLLSYATLLCGSLLSAAILII, VISLGFTLLTIGILCGAVWAN, TWAFITWTIFAIYLH, and VASIGFLIIWICYFGINLLGI.

Belongs to the CcmF/CycK/Ccl1/NrfE/CcsA family. As to quaternary structure, may interact with Ccs1.

Its subcellular location is the plastid. The protein resides in the chloroplast thylakoid membrane. Required during biogenesis of c-type cytochromes (cytochrome c6 and cytochrome f) at the step of heme attachment. In Brachypodium distachyon (Purple false brome), this protein is Cytochrome c biogenesis protein CcsA.